A 126-amino-acid chain; its full sequence is Follitropin subunit beta (126 aa).

A signal peptide spans 1–19 (MKLIQLCILFWCWRAICCQ). 6 cysteine pairs are disulfide-bonded: C21–C69, C35–C84, C38–C122, C46–C100, C50–C102, and C105–C112. 2 N-linked (GlcNAc...) asparagine glycosylation sites follow: N25 and N42.

The protein belongs to the glycoprotein hormones subunit beta family. In terms of assembly, heterodimer. The active follitropin is a heterodimer composed of an alpha chain/CGA shared with other hormones and a unique beta chain/FSHB shown here.

It is found in the secreted. Its function is as follows. Together with the alpha chain CGA constitutes follitropin, the follicle-stimulating hormone, and provides its biological specificity to the hormone heterodimer. Binds FSHR, a G protein-coupled receptor, on target cells to activate downstream signaling pathways. Follitropin is involved in follicle development and spermatogenesis in reproductive organs. In Phodopus sungorus (Striped hairy-footed hamster), this protein is Follitropin subunit beta (FSHB).